The following is a 168-amino-acid chain: MTRYEDLPYRTCVGIALINSEGLVFIGRRAGGIEHVDDTHVWQMPQGGVDPGEDAWEAAKRELYEETSVRSVEKLAEIDDWLTYDIPRTVAGRAWKGRYRGQRQKWFALRFTGKDSEIDVEHPGGGHHKAEFITWRWEPLQNLPTLIVPFKRPVYERVAKEFATLAGG.

The region spanning 8–160 is the Nudix hydrolase domain; sequence PYRTCVGIAL…KRPVYERVAK (153 aa). Residues 47-68 carry the Nudix box motif; it reads GGVDPGEDAWEAAKRELYEETS.

This sequence belongs to the Nudix hydrolase family. RppH subfamily. It depends on a divalent metal cation as a cofactor.

Functionally, accelerates the degradation of transcripts by removing pyrophosphate from the 5'-end of triphosphorylated RNA, leading to a more labile monophosphorylated state that can stimulate subsequent ribonuclease cleavage. The chain is RNA pyrophosphohydrolase from Bradyrhizobium sp. (strain ORS 278).